A 178-amino-acid polypeptide reads, in one-letter code: Caveolin-1 (178 aa).

Ser2 carries the N-acetylserine modification. Position 2 is a phosphoserine (Ser2). The required for homooligomerization stretch occupies residues 2 to 94 (SGGKYVDSEG…WKASFTTFTV (93 aa)). Over 2–104 (SGGKYVDSEG…TKYWFYRLLS (103 aa)) the chain is Cytoplasmic. At Lys5 the chain carries N6-acetyllysine; alternate. Lys5 participates in a covalent cross-link: Glycyl lysine isopeptide (Lys-Gly) (interchain with G-Cter in ubiquitin); alternate. A Phosphotyrosine modification is found at Tyr6. At Ser9 the chain carries Phosphoserine. Tyr14 is modified (phosphotyrosine; by ABL1). Tyr25 is subject to Phosphotyrosine. Glycyl lysine isopeptide (Lys-Gly) (interchain with G-Cter in ubiquitin) cross-links involve residues Lys26, Lys30, Lys39, Lys47, and Lys57. The interaction with CAVIN3 stretch occupies residues 82 to 94 (DGIWKASFTTFTV). The segment at residues 105 to 125 (ALFGIPMALIWGIYFAILSFL) is an intramembrane region (helical). The Cytoplasmic segment spans residues 126 to 178 (HIWAVVPCIKSFLIEIQCISRVYSIYVHTFCDPFFEAVGKIFSNIRINMQKEI). The interval 131 to 142 (VPCIKSFLIEIQ) is interacts with SPRY1, SPRY2, SPRY3 and SPRY4. Residues Cys133, Cys143, and Cys156 are each lipidated (S-palmitoyl cysteine). An interacts with SPRY1, SPRY2, and SPRY4 region spans residues 149–160 (SIYVHTFCDPFF). The tract at residues 167–178 (FSNIRINMQKEI) is interacts with SPRY1, SPRY2, SPRY3 and SPRY4.

Belongs to the caveolin family. In terms of assembly, homooligomer. Interacts with GLIPR2. Interacts with NOSTRIN. Interacts with SNAP25 and STX1A. Interacts (via the N-terminus) with DPP4; the interaction is direct. Interacts with CTNNB1, CDH1 and JUP. Interacts with PACSIN2; this interaction induces membrane tubulation. Interacts with SLC7A9. Interacts with BMX and BTK. Interacts with TGFBR1. Interacts with CAVIN3 (via leucine-zipper domain) in a cholesterol-sensitive manner. Interacts with CAVIN1. Interacts with EHD2 in a cholesterol-dependent manner. Forms a ternary complex with UBXN6 and VCP; mediates CAV1 targeting to lysosomes for degradation. Interacts with ABCG1; this interaction regulates ABCG1-mediated cholesterol efflux. Interacts with NEU3; this interaction enhances NEU3 sialidase activity within caveola. Interacts (via C-terminus) with SPRY1, SPRY2 (via C-terminus), SPRY3, and SPRY4. Interacts with IGFBP5; this interaction allows trafficking of IGFBP5 from the plasma membrane to the nucleus. Phosphorylated at Tyr-14 by ABL1 in response to oxidative stress. In terms of processing, ubiquitinated. Undergo monoubiquitination and multi- and/or polyubiquitination. Monoubiquitination of N-terminal lysines promotes integration in a ternary complex with UBXN6 and VCP which promotes oligomeric CAV1 targeting to lysosomes for degradation. Ubiquitinated by ZNRF1; leading to degradation and modulation of the TLR4-mediated immune response.

Its subcellular location is the golgi apparatus membrane. It localises to the cell membrane. It is found in the membrane. The protein localises to the caveola. The protein resides in the membrane raft. In terms of biological role, may act as a scaffolding protein within caveolar membranes. Forms a stable heterooligomeric complex with CAV2 that targets to lipid rafts and drives caveolae formation. Mediates the recruitment of CAVIN proteins (CAVIN1/2/3/4) to the caveolae. Interacts directly with G-protein alpha subunits and can functionally regulate their activity. Involved in the costimulatory signal essential for T-cell receptor (TCR)-mediated T-cell activation. Its binding to DPP4 induces T-cell proliferation and NF-kappa-B activation in a T-cell receptor/CD3-dependent manner. Recruits CTNNB1 to caveolar membranes and may regulate CTNNB1-mediated signaling through the Wnt pathway. Negatively regulates TGFB1-mediated activation of SMAD2/3 by mediating the internalization of TGFBR1 from membrane rafts leading to its subsequent degradation. Binds 20(S)-hydroxycholesterol (20(S)-OHC). The chain is Caveolin-1 (CAV1) from Felis catus (Cat).